The chain runs to 523 residues: Acetyl-CoA hydrolase (523 aa).

A CoA-binding site is contributed by 277 to 281 (GIGNI). The 5-glutamyl coenzyme A thioester intermediate role is filled by glutamate 302. CoA-binding residues include asparagine 392 and glycine 396.

The protein belongs to the acetyl-CoA hydrolase/transferase family.

Its subcellular location is the cytoplasm. It catalyses the reaction acetyl-CoA + H2O = acetate + CoA + H(+). Presumably involved in regulating the intracellular acetyl-CoA pool for fatty acid and cholesterol synthesis and fatty acid oxidation. The chain is Acetyl-CoA hydrolase (ACH1) from Kluyveromyces lactis (strain ATCC 8585 / CBS 2359 / DSM 70799 / NBRC 1267 / NRRL Y-1140 / WM37) (Yeast).